The following is a 463-amino-acid chain: Argininosuccinate lyase (463 aa).

The protein belongs to the lyase 1 family. Argininosuccinate lyase subfamily.

It is found in the cytoplasm. The enzyme catalyses 2-(N(omega)-L-arginino)succinate = fumarate + L-arginine. The protein operates within amino-acid biosynthesis; L-arginine biosynthesis; L-arginine from L-ornithine and carbamoyl phosphate: step 3/3. This is Argininosuccinate lyase from Ruegeria pomeroyi (strain ATCC 700808 / DSM 15171 / DSS-3) (Silicibacter pomeroyi).